A 542-amino-acid polypeptide reads, in one-letter code: Multidrug transporter DTR1 (542 aa).

Residues N6 and N46 are each glycosylated (N-linked (GlcNAc...) asparagine). The chain crosses the membrane as a helical span at residues 80–100 (LIFLIVIYNGFLGPLAGNVFI). N-linked (GlcNAc...) asparagine glycans are attached at residues N111 and N118. Helical transmembrane passes span 119–139 (ATVS…GALA), 146–166 (ILYI…ASVP), 169–189 (IGSL…VISL), 210–230 (FMLG…LILL), and 237–257 (WLFG…ILLL). Residue N274 is glycosylated (N-linked (GlcNAc...) asparagine). A run of 4 helical transmembrane segments spans residues 332–352 (IMTF…FCTY), 374–394 (IGAC…IGGH), 419–439 (ILTV…GWCI), and 441–461 (FHYH…GLTW). N463 is a glycosylation site (N-linked (GlcNAc...) asparagine). Helical transmembrane passes span 481-501 (AIAV…ALIA) and 511-531 (FCFL…LVLI).

Belongs to the major facilitator superfamily. CAR1 family.

Its subcellular location is the cell membrane. Its function is as follows. Plasma membrane acetic acid exporter, relieving the stress induced upon cells within hemocytes, and thus enabling increased proliferation and virulence against Galleria mellonella larvae. Confers resistance to weak acid and oxidative stress, but not to antifungal drugs. The chain is Multidrug transporter DTR1 from Candida glabrata (strain ATCC 2001 / BCRC 20586 / JCM 3761 / NBRC 0622 / NRRL Y-65 / CBS 138) (Yeast).